The following is a 536-amino-acid chain: MTKFIFVTGGVVSSLGKGITAASLGRLLKDRGLKVTIQKFDPYLNVDPGTMSPYQHGEVFVTDDGAETDLDLGHYERFIDINLNKYSNVTAGKVYSHVLKKERRGDYLGGTVQVIPHITNEIKERLLLAGESTNADVVITEIGGTTGDIESLPFIEAIRQIRSDLGRENVMYVHCTLLPYIKAAGEMKTKPTQHSVKELRGLGIQPDLIVVRTEYELTQDLKDKIALFCDIDKASVIECRDADSLYEIPLQLSKQDMDDIVIKRLELNPKYETQLDEWQYLLDTVNSLDGKITIGLVGKYVSLQDAYLSVVESLKHAGYPFKKDIEVKWIDSSEVTDENVAEILAEVDGILVPGGFGFRASEGKISAIKYARENNVPYFGICLGMQLATVEFARNVIGLDDAHSAELDPNTPHPIIDLLPEQKDIEDLGGTLRLGLYPCHIKEGTLADSIYNETEIEERHRHRYEFNNEYREQLEANGMVFSGTSPDGRLVEMVEIPSNDFFVACQFHPEFLSRPNRPQPIFKAFIEASLNHQQSK.

Positions 1 to 267 are amidoligase domain; that stretch reads MTKFIFVTGG…DDIVIKRLEL (267 aa). Ser-13 provides a ligand contact to CTP. Ser-13 serves as a coordination point for UTP. 14–19 is a binding site for ATP; that stretch reads SLGKGI. Residue Tyr-54 participates in L-glutamine binding. Asp-71 is a binding site for ATP. Positions 71 and 141 each coordinate Mg(2+). CTP-binding positions include 148-150, 188-193, and Lys-224; these read DIE and KTKPTQ. Residues 188–193 and Lys-224 contribute to the UTP site; that span reads KTKPTQ. ATP is bound at residue 240-242; sequence RDA. The region spanning 293-535 is the Glutamine amidotransferase type-1 domain; sequence TIGLVGKYVS…IEASLNHQQS (243 aa). Gly-355 is a binding site for L-glutamine. Cys-382 functions as the Nucleophile; for glutamine hydrolysis in the catalytic mechanism. Residues 383–386, Glu-406, and Arg-463 each bind L-glutamine; that span reads LGMQ. Active-site residues include His-508 and Glu-510.

It belongs to the CTP synthase family. As to quaternary structure, homotetramer.

The enzyme catalyses UTP + L-glutamine + ATP + H2O = CTP + L-glutamate + ADP + phosphate + 2 H(+). It catalyses the reaction L-glutamine + H2O = L-glutamate + NH4(+). The catalysed reaction is UTP + NH4(+) + ATP = CTP + ADP + phosphate + 2 H(+). Its pathway is pyrimidine metabolism; CTP biosynthesis via de novo pathway; CTP from UDP: step 2/2. Its activity is regulated as follows. Allosterically activated by GTP, when glutamine is the substrate; GTP has no effect on the reaction when ammonia is the substrate. The allosteric effector GTP functions by stabilizing the protein conformation that binds the tetrahedral intermediate(s) formed during glutamine hydrolysis. Inhibited by the product CTP, via allosteric rather than competitive inhibition. Functionally, catalyzes the ATP-dependent amination of UTP to CTP with either L-glutamine or ammonia as the source of nitrogen. Regulates intracellular CTP levels through interactions with the four ribonucleotide triphosphates. The sequence is that of CTP synthase from Staphylococcus saprophyticus subsp. saprophyticus (strain ATCC 15305 / DSM 20229 / NCIMB 8711 / NCTC 7292 / S-41).